Consider the following 201-residue polypeptide: Ras-related protein Rab-1B (201 aa).

M1 is modified (N-acetylmethionine). GTP contacts are provided by S17, G18, V19, G20, K21, S22, C23, Y33, T34, E35, S36, S39, and T40. S22 serves as a coordination point for Mg(2+). Positions 30–45 (DDTYTESYISTIGVDF) match the Switch 1 motif. Mg(2+) contacts are provided by T40 and D63. A switch 2 region; required for interaction with REP1/CHM region spans residues 64–83 (TAGQERFRTITSSYYRGAHG). The Switch 2 motif lies at 65-80 (AGQERFRTITSSYYRG). G66 serves as a coordination point for GTP. A (Microbial infection) O-(2-cholinephosphoryl)serine modification is found at S76. Y77 is subject to (Microbial infection) O-AMP-tyrosine. N121, K122, D124, S151, A152, and K153 together coordinate GTP. The disordered stretch occupies residues 174–201 (GPGAASGGERPNLKIDSTPVKPAGGGCC). Residues C200 and C201 are each lipidated (S-geranylgeranyl cysteine). C201 carries the cysteine methyl ester modification.

The protein belongs to the small GTPase superfamily. Rab family. Interacts with MICAL1 and MICAL2. Interacts (in GTP-bound form) with MICALCL, MICAL1 and MILCAL3. Interacts with GDI1; the interaction requires the GDP-bound state. Interacts with CHM/REP1; the interaction requires the GDP-bound form and is necessary for prenylation by GGTase II. Interacts with RabGAP TBC1D20. Interacts (in GDP-bound form) with lipid phosphatase MTMR6 (via GRAM domain); the interaction regulates MTMR6 recruitment to the endoplasmic reticulum-Golgi intermediate compartment. Interacts (in GDP-bound form) with lipid phosphatase MTMR7. In terms of assembly, (Microbial infection) Interacts with L.pneumophila AnkX. Interacts with L.pneumophila Lem3. Interacts with L.pneumophila SidD. Interacts with L.pneumophila DrrA. It depends on Mg(2+) as a cofactor. In terms of processing, prenylated; by GGTase II, only after interaction of the substrate with Rab escort protein 1 (REP1). (Microbial infection) AMPylation at Tyr-77 by L.pneumophila DrrA occurs in the switch 2 region and leads to moderate inactivation of the GTPase activity. It appears to prolong the lifetime of the GTP state of RAB1B by restricting access of GTPase effectors to switch 2 and blocking effector-stimulated GTP hydrolysis, thereby rendering RAB1B constitutively active. It is later de-AMPylated by L.pneumophila SidD, releasing RAB1B from bacterial phagosomes. Post-translationally, (Microbial infection) Phosphocholinated at Ser-76 by L.pneumophila AnkX, leading to displace GDP dissociation inhibitors (GDI). Both GDP-bound and GTP-bound forms can be phosphocholinated. Dephosphocholinated by L.pneumophila Lem3, restoring accessibility to L.pneumophila GTPase effector LepB. In terms of processing, (Microbial infection) Glycosylated by S.typhimurium protein Ssek3: arginine GlcNAcylation prevents GTPase activity, thereby disrupting vesicular protein transport from the endoplasmic reticulum (ER) to the Golgi compartment.

The protein resides in the cytoplasm. It localises to the membrane. The protein localises to the preautophagosomal structure membrane. Its subcellular location is the perinuclear region. The catalysed reaction is GTP + H2O = GDP + phosphate + H(+). With respect to regulation, regulated by guanine nucleotide exchange factors (GEFs) which promote the exchange of bound GDP for free GTP. Regulated by GTPase activating proteins (GAPs) including TBC1D20 which increases the GTP hydrolysis activity. Inhibited by GDP dissociation inhibitors (GDIs). In terms of biological role, the small GTPases Rab are key regulators of intracellular membrane trafficking, from the formation of transport vesicles to their fusion with membranes. Rabs cycle between an inactive GDP-bound form and an active GTP-bound form that is able to recruit to membranes different set of downstream effectors directly responsible for vesicle formation, movement, tethering and fusion. Plays a role in the initial events of the autophagic vacuole development which take place at specialized regions of the endoplasmic reticulum. Regulates vesicular transport between the endoplasmic reticulum and successive Golgi compartments. Required to modulate the compacted morphology of the Golgi. Promotes the recruitment of lipid phosphatase MTMR6 to the endoplasmic reticulum-Golgi intermediate compartment. The sequence is that of Ras-related protein Rab-1B from Homo sapiens (Human).